The chain runs to 158 residues: Transcription elongation factor GreA (158 aa).

Residues 46 to 66 (AEYEAAKERQGFIEGRISELE) adopt a coiled-coil conformation.

It belongs to the GreA/GreB family.

Its function is as follows. Necessary for efficient RNA polymerase transcription elongation past template-encoded arresting sites. The arresting sites in DNA have the property of trapping a certain fraction of elongating RNA polymerases that pass through, resulting in locked ternary complexes. Cleavage of the nascent transcript by cleavage factors such as GreA or GreB allows the resumption of elongation from the new 3'terminus. GreA releases sequences of 2 to 3 nucleotides. This is Transcription elongation factor GreA from Neisseria meningitidis serogroup A / serotype 4A (strain DSM 15465 / Z2491).